Consider the following 161-residue polypeptide: DNA-directed RNA polymerase 18 kDa subunit (161 aa).

This sequence belongs to the poxviridae DNA-directed RNA polymerase 18 kDa subunit family. The DNA-dependent RNA polymerase used for intermediate and late genes expression consists of eight subunits Rpo30/OPG66, Rpo7/OPG90, Rpo22/OPG103, Rpo147/OPG105, Rpo18/OPG119, Rpo19/OPG131, Rpo132/OPG151 and Rpo35/OPG156. The same holoenzyme, with the addition of the transcription-specificity factor OPG109, is used for early gene expression.

Its subcellular location is the virion. It carries out the reaction RNA(n) + a ribonucleoside 5'-triphosphate = RNA(n+1) + diphosphate. Part of the DNA-dependent RNA polymerase which catalyzes the transcription of viral DNA into RNA using the four ribonucleoside triphosphates as substrates. Responsible for the transcription of early, intermediate and late genes. DNA-dependent RNA polymerase associates with the early transcription factor (ETF), itself composed of OPG118 and OPG133, thereby allowing the early genes transcription. Late transcription, and probably also intermediate transcription, require newly synthesized RNA polymerase. This is DNA-directed RNA polymerase 18 kDa subunit (OPG119) from Homo sapiens (Human).